Here is an 867-residue protein sequence, read N- to C-terminus: Probable alpha,alpha-trehalose-phosphate synthase [UDP-forming] 9 (867 aa).

At serine 5 the chain carries Phosphoserine. Phosphothreonine is present on threonine 32. The tract at residues 59–546 is glycosyltransferase; that stretch reads ERKIIVANML…AKSFMQDLER (488 aa).

This sequence in the N-terminal section; belongs to the glycosyltransferase 20 family. In the C-terminal section; belongs to the trehalose phosphatase family.

It catalyses the reaction D-glucose 6-phosphate + UDP-alpha-D-glucose = alpha,alpha-trehalose 6-phosphate + UDP + H(+). This is Probable alpha,alpha-trehalose-phosphate synthase [UDP-forming] 9 (TPS9) from Arabidopsis thaliana (Mouse-ear cress).